The chain runs to 434 residues: 3-phosphoshikimate 1-carboxyvinyltransferase (434 aa).

Positions 22, 23, and 27 each coordinate 3-phosphoshikimate. K22 is a binding site for phosphoenolpyruvate. The phosphoenolpyruvate site is built by G93 and R121. Residues S168, S169, Q170, S199, D320, and K347 each coordinate 3-phosphoshikimate. Q170 is a binding site for phosphoenolpyruvate. The active-site Proton acceptor is D320. Phosphoenolpyruvate-binding residues include R351, R394, and K419.

Belongs to the EPSP synthase family. As to quaternary structure, monomer.

The protein localises to the cytoplasm. The enzyme catalyses 3-phosphoshikimate + phosphoenolpyruvate = 5-O-(1-carboxyvinyl)-3-phosphoshikimate + phosphate. Its pathway is metabolic intermediate biosynthesis; chorismate biosynthesis; chorismate from D-erythrose 4-phosphate and phosphoenolpyruvate: step 6/7. Its function is as follows. Catalyzes the transfer of the enolpyruvyl moiety of phosphoenolpyruvate (PEP) to the 5-hydroxyl of shikimate-3-phosphate (S3P) to produce enolpyruvyl shikimate-3-phosphate and inorganic phosphate. The sequence is that of 3-phosphoshikimate 1-carboxyvinyltransferase from Burkholderia cenocepacia (strain HI2424).